Consider the following 283-residue polypeptide: 2-dehydro-3-deoxyphosphooctonate aldolase (283 aa).

The protein belongs to the KdsA family.

It is found in the cytoplasm. The enzyme catalyses D-arabinose 5-phosphate + phosphoenolpyruvate + H2O = 3-deoxy-alpha-D-manno-2-octulosonate-8-phosphate + phosphate. It functions in the pathway carbohydrate biosynthesis; 3-deoxy-D-manno-octulosonate biosynthesis; 3-deoxy-D-manno-octulosonate from D-ribulose 5-phosphate: step 2/3. The protein operates within bacterial outer membrane biogenesis; lipopolysaccharide biosynthesis. The protein is 2-dehydro-3-deoxyphosphooctonate aldolase of Vibrio campbellii (strain ATCC BAA-1116).